The sequence spans 669 residues: DNA helicase/primase complex-associated protein (669 aa).

Positions 502–526 (RSTAGTGGEPNPRHITGPDTEGNGE) are disordered.

Belongs to the herpesviridae HEPA family. As to quaternary structure, associates with the primase and the helicase to form the helicase-primase complex. Interacts with the origin-binding protein. Interacts with the polymerase catalytic subunit.

The protein localises to the host nucleus. Functionally, component of the helicase/primase complex. Unwinds the DNA at the replication forks and generates single-stranded DNA for both leading and lagging strand synthesis. The primase synthesizes short RNA primers on the lagging strand that the polymerase presumably elongates using dNTPs. The primase-associated factor has no known catalytic activity in the complex and may serve to facilitate the formation of the replisome by directly interacting with the origin-binding protein and the polymerase. In Human herpesvirus 8 type P (isolate GK18) (HHV-8), this protein is DNA helicase/primase complex-associated protein (ORF40).